Here is a 218-residue protein sequence, read N- to C-terminus: Octanoyltransferase (218 aa).

A BPL/LPL catalytic domain is found at 31–207; that stretch reads AQTPDELWLL…QLAAQLGYAE (177 aa). Substrate contacts are provided by residues 70–77, 137–139, and 150–152; these read RGGQVTYH, SLG, and GLA. Cysteine 168 acts as the Acyl-thioester intermediate in catalysis.

Belongs to the LipB family.

The protein resides in the cytoplasm. The enzyme catalyses octanoyl-[ACP] + L-lysyl-[protein] = N(6)-octanoyl-L-lysyl-[protein] + holo-[ACP] + H(+). It functions in the pathway protein modification; protein lipoylation via endogenous pathway; protein N(6)-(lipoyl)lysine from octanoyl-[acyl-carrier-protein]: step 1/2. Its function is as follows. Catalyzes the transfer of endogenously produced octanoic acid from octanoyl-acyl-carrier-protein onto the lipoyl domains of lipoate-dependent enzymes. Lipoyl-ACP can also act as a substrate although octanoyl-ACP is likely to be the physiological substrate. The polypeptide is Octanoyltransferase (Azotobacter vinelandii (strain DJ / ATCC BAA-1303)).